A 539-amino-acid chain; its full sequence is Chaperonin GroEL (539 aa).

ATP-binding positions include threonine 29–proline 32, aspartate 86–threonine 90, glycine 413, asparagine 476–alanine 478, and aspartate 492.

This sequence belongs to the chaperonin (HSP60) family. Forms a cylinder of 14 subunits composed of two heptameric rings stacked back-to-back. Interacts with the co-chaperonin GroES.

It localises to the cytoplasm. The catalysed reaction is ATP + H2O + a folded polypeptide = ADP + phosphate + an unfolded polypeptide.. Its function is as follows. Together with its co-chaperonin GroES, plays an essential role in assisting protein folding. The GroEL-GroES system forms a nano-cage that allows encapsulation of the non-native substrate proteins and provides a physical environment optimized to promote and accelerate protein folding. This chain is Chaperonin GroEL, found in Pediococcus pentosaceus (strain ATCC 25745 / CCUG 21536 / LMG 10740 / 183-1w).